The sequence spans 202 residues: ATP-dependent Clp protease proteolytic subunit (202 aa).

Residue Ser-98 is the Nucleophile of the active site. Residue His-123 is part of the active site.

Belongs to the peptidase S14 family. In terms of assembly, fourteen ClpP subunits assemble into 2 heptameric rings which stack back to back to give a disk-like structure with a central cavity, resembling the structure of eukaryotic proteasomes.

It is found in the cytoplasm. It carries out the reaction Hydrolysis of proteins to small peptides in the presence of ATP and magnesium. alpha-casein is the usual test substrate. In the absence of ATP, only oligopeptides shorter than five residues are hydrolyzed (such as succinyl-Leu-Tyr-|-NHMec, and Leu-Tyr-Leu-|-Tyr-Trp, in which cleavage of the -Tyr-|-Leu- and -Tyr-|-Trp bonds also occurs).. Its function is as follows. Cleaves peptides in various proteins in a process that requires ATP hydrolysis. Has a chymotrypsin-like activity. Plays a major role in the degradation of misfolded proteins. The chain is ATP-dependent Clp protease proteolytic subunit from Desulfovibrio desulfuricans (strain ATCC 27774 / DSM 6949 / MB).